The following is a 548-amino-acid chain: Synaptic vesicle 2-related protein (548 aa).

Topologically, residues 1–87 (MEEDLFQLRQ…GFGKFQWKLS (87 aa)) are cytoplasmic. Ser-25 and Ser-31 each carry phosphoserine. Residues 88 to 108 (VLTGLAWMADAMEMMILSILA) form a helical membrane-spanning segment. Residues 109-122 (PQLHCEWRLPSWQV) lie on the Vesicular side of the membrane. A helical membrane pass occupies residues 123–143 (ALLTSVVFVGMMSSSTLWGNI). At 144–156 (SDQYGRKTGLKIS) the chain is on the cytoplasmic side. A helical membrane pass occupies residues 157–177 (VLWTLYYGILSAFAPVYSWIL). Residues 178–180 (VLR) lie on the Vesicular side of the membrane. Residues 181–201 (GLVGFGIGGVPQSVTLYAEFL) traverse the membrane as a helical segment. Residues 202 to 209 (PMKARAKC) lie on the Cytoplasmic side of the membrane. A helical transmembrane segment spans residues 210–230 (ILLIEVFWAIGTVFEVVLAVF). The Vesicular portion of the chain corresponds to 231-238 (VMPSLGWR). A helical transmembrane segment spans residues 239-259 (WLLILSAVPLLLFAVLCFWLP). At 260 to 316 (ESARYDVLSGNQEKAIATLKRIATENGAPMPLGKLIISRQEDRGKMRDLFTPHFRWT) the chain is on the cytoplasmic side. Residues 317–337 (TLLLWFIWFSNAFSYYGLVLL) form a helical membrane-spanning segment. The Vesicular segment spans residues 338 to 373 (TTELFQAGDVCSISSRKKAVEAKCSLACEYLSEEDY). Residues 374–394 (MDLLWTTLSEFPGVLVTLWII) form a helical membrane-spanning segment. At 395–401 (DRLGRKK) the chain is on the cytoplasmic side. Residues 402–422 (TMALCFVVFSFCSLLLFICVG) form a helical membrane-spanning segment. Over 423-425 (RNM) the chain is Vesicular. Residues 426 to 446 (LTLLLFIARAFISGGFQAAYV) traverse the membrane as a helical segment. At 447 to 457 (YTPEVYPTATR) the chain is on the cytoplasmic side. Residues 458-478 (ALGLGTCSGMARVGALITPFI) form a helical membrane-spanning segment. Residues 479–489 (AQVMLESSVYL) are Vesicular-facing. The chain crosses the membrane as a helical span at residues 490 to 510 (TLAVYSGCCLLAALASCFLPI). Over 511-548 (ETKGRGLQESSHREWGQEMVGRGAHGTGVARSNSGSQE) the chain is Cytoplasmic. Residues 528–548 (EMVGRGAHGTGVARSNSGSQE) form a disordered region. Ser-542 carries the phosphoserine modification.

Belongs to the major facilitator superfamily. As to expression, detected in brain and adrenal medulla.

It is found in the cytoplasmic vesicle. The protein localises to the secretory vesicle. It localises to the synaptic vesicle membrane. The polypeptide is Synaptic vesicle 2-related protein (SVOP) (Bos taurus (Bovine)).